Here is a 738-residue protein sequence, read N- to C-terminus: Catalase-peroxidase 2 (738 aa).

Positions 1 to 26 (MKRTLPTLSALALSMSLALAAGQTQA) are cleaved as a signal peptide. Residues 104–226 (WHSAGVYRIF…LGATQMGLIY (123 aa)) constitute a cross-link (tryptophyl-tyrosyl-methioninium (Trp-Tyr) (with M-252)). The Proton acceptor role is filled by His105. The tryptophyl-tyrosyl-methioninium (Tyr-Met) (with W-104) cross-link spans 226–252 (YVNPEGPNGVPDPLAAARDIRETFGRM). His267 contacts heme b.

The protein belongs to the peroxidase family. Peroxidase/catalase subfamily. In terms of assembly, homodimer or homotetramer. It depends on heme b as a cofactor. In terms of processing, formation of the three residue Trp-Tyr-Met cross-link is important for the catalase, but not the peroxidase activity of the enzyme.

The enzyme catalyses H2O2 + AH2 = A + 2 H2O. It catalyses the reaction 2 H2O2 = O2 + 2 H2O. Functionally, bifunctional enzyme with both catalase and broad-spectrum peroxidase activity. The sequence is that of Catalase-peroxidase 2 from Shewanella amazonensis (strain ATCC BAA-1098 / SB2B).